A 1242-amino-acid chain; its full sequence is Phosphorylase b kinase regulatory subunit alpha, skeletal muscle isoform (1242 aa).

Serine 630, serine 731, serine 737, serine 740, serine 760, serine 813, serine 974, serine 983, and serine 987 each carry phosphoserine. The segment at 812-842 (LSELYVKVGEIRHWGLIRYISGILRKKVEAL) is calmodulin-binding. Serine 1009 carries the phosphoserine; by autocatalysis modification. Serine 1020 carries the phosphoserine; by PKA modification. Phosphoserine is present on residues serine 1022 and serine 1025. Residues 1065 to 1105 (SKDSRQGQWQRRRRLDGALNRVPIGFYQKVWKILQKCHGLS) are calmodulin-binding. At serine 1132 the chain carries Phosphoserine. The S-farnesyl cysteine moiety is linked to residue cysteine 1239.

This sequence belongs to the phosphorylase b kinase regulatory chain family. Hexadecamer of 4 heterotetramers, each composed of alpha, beta, gamma, and delta subunits. Alpha (PHKA1 or PHKA2) and beta (PHKB) are regulatory subunits, gamma (PHKG1 or PHKG2) is the catalytic subunit, and delta is calmodulin. Post-translationally, although the final Cys may be farnesylated, the terminal tripeptide is probably not removed, and the C-terminus is not methylated.

Its subcellular location is the cell membrane. Its pathway is glycan biosynthesis; glycogen metabolism. With respect to regulation, by phosphorylation of various serine residues and by calcium. Functionally, phosphorylase b kinase catalyzes the phosphorylation of serine in certain substrates, including troponin I. The alpha chain may bind calmodulin. The sequence is that of Phosphorylase b kinase regulatory subunit alpha, skeletal muscle isoform (Phka1) from Rattus norvegicus (Rat).